The primary structure comprises 566 residues: NAD-dependent malic enzyme (566 aa).

The active-site Proton donor is the Y104. R157 contributes to the NAD(+) binding site. K175 acts as the Proton acceptor in catalysis. E246, D247, and D270 together coordinate a divalent metal cation. NAD(+) contacts are provided by D270 and N419.

It belongs to the malic enzymes family. In terms of assembly, homotetramer. Requires Mg(2+) as cofactor. It depends on Mn(2+) as a cofactor.

The enzyme catalyses (S)-malate + NAD(+) = pyruvate + CO2 + NADH. The catalysed reaction is oxaloacetate + H(+) = pyruvate + CO2. This chain is NAD-dependent malic enzyme, found in Cronobacter sakazakii (strain ATCC BAA-894) (Enterobacter sakazakii).